We begin with the raw amino-acid sequence, 308 residues long: Glycosyltransferase 6 domain-containing protein 1 (308 aa).

Residues 1–6 (MNSKRM) are Cytoplasmic-facing. The helical; Signal-anchor for type II membrane protein transmembrane segment at 7–23 (LLLVLFAFSLMLVERYF) threads the bilayer. At 24-308 (RNHQVEELRL…KVAHDSHRKL (285 aa)) the chain is on the lumenal side. Asn74 is a glycosylation site (N-linked (GlcNAc...) asparagine). Substrate is bound by residues 82–87 (FATGRF), 173–175 (AVN), and 195–198 (HAWW). The active-site Nucleophile is Glu263.

Belongs to the glycosyltransferase 6 family. The cofactor is Mn(2+).

Its subcellular location is the membrane. This Macaca fascicularis (Crab-eating macaque) protein is Glycosyltransferase 6 domain-containing protein 1 (GLT6D1).